The sequence spans 482 residues: UDP-glucose 6-dehydrogenase 2 (482 aa).

NAD(+)-binding positions include glycine 8 to glycine 13, aspartate 33, arginine 38, valine 86 to threonine 90, serine 127 to threonine 128, and glutamate 163. Substrate contacts are provided by residues glutamate 159–glutamate 163, lysine 218–leucine 225, and arginine 258–glycine 271. The active-site Nucleophile is cysteine 274. Cysteine 274–lysine 277 is a binding site for NAD(+). Substrate is bound at residue phenylalanine 336–lysine 337. Residue arginine 344 coordinates NAD(+). Serine 395 carries the post-translational modification Phosphoserine. A substrate-binding site is contributed by arginine 449.

This sequence belongs to the UDP-glucose/GDP-mannose dehydrogenase family.

The catalysed reaction is UDP-alpha-D-glucose + 2 NAD(+) + H2O = UDP-alpha-D-glucuronate + 2 NADH + 3 H(+). Its pathway is nucleotide-sugar biosynthesis; UDP-alpha-D-glucuronate biosynthesis; UDP-alpha-D-glucuronate from UDP-alpha-D-glucose: step 1/1. Its function is as follows. Involved in the biosynthesis of UDP-glucuronic acid (UDP-GlcA), providing nucleotide sugars for cell-wall polymers. This chain is UDP-glucose 6-dehydrogenase 2 (UGD2), found in Oryza sativa subsp. japonica (Rice).